We begin with the raw amino-acid sequence, 365 residues long: Phosphoserine aminotransferase (365 aa).

Arg-46 is a binding site for L-glutamate. Residues 80–81 (AT), Trp-106, Thr-157, Asp-177, and Gln-200 each bind pyridoxal 5'-phosphate. N6-(pyridoxal phosphate)lysine is present on Lys-201. 242-243 (NT) contacts pyridoxal 5'-phosphate.

The protein belongs to the class-V pyridoxal-phosphate-dependent aminotransferase family. SerC subfamily. In terms of assembly, homodimer. The cofactor is pyridoxal 5'-phosphate.

The protein resides in the cytoplasm. The catalysed reaction is O-phospho-L-serine + 2-oxoglutarate = 3-phosphooxypyruvate + L-glutamate. It catalyses the reaction 4-(phosphooxy)-L-threonine + 2-oxoglutarate = (R)-3-hydroxy-2-oxo-4-phosphooxybutanoate + L-glutamate. It functions in the pathway amino-acid biosynthesis; L-serine biosynthesis; L-serine from 3-phospho-D-glycerate: step 2/3. The protein operates within cofactor biosynthesis; pyridoxine 5'-phosphate biosynthesis; pyridoxine 5'-phosphate from D-erythrose 4-phosphate: step 3/5. Functionally, catalyzes the reversible conversion of 3-phosphohydroxypyruvate to phosphoserine and of 3-hydroxy-2-oxo-4-phosphonooxybutanoate to phosphohydroxythreonine. In Leptospira biflexa serovar Patoc (strain Patoc 1 / Ames), this protein is Phosphoserine aminotransferase.